The sequence spans 454 residues: 3-phosphoshikimate 1-carboxyvinyltransferase (454 aa).

Positions 39, 40, and 44 each coordinate 3-phosphoshikimate. A phosphoenolpyruvate-binding site is contributed by Lys39. Gly112 and Arg140 together coordinate phosphoenolpyruvate. Residues Ser185, Gln187, Asp333, and Lys360 each contribute to the 3-phosphoshikimate site. Residue Gln187 participates in phosphoenolpyruvate binding. The active-site Proton acceptor is the Asp333. Arg364 and Arg405 together coordinate phosphoenolpyruvate.

Belongs to the EPSP synthase family. As to quaternary structure, monomer.

The protein resides in the cytoplasm. The enzyme catalyses 3-phosphoshikimate + phosphoenolpyruvate = 5-O-(1-carboxyvinyl)-3-phosphoshikimate + phosphate. The protein operates within metabolic intermediate biosynthesis; chorismate biosynthesis; chorismate from D-erythrose 4-phosphate and phosphoenolpyruvate: step 6/7. Catalyzes the transfer of the enolpyruvyl moiety of phosphoenolpyruvate (PEP) to the 5-hydroxyl of shikimate-3-phosphate (S3P) to produce enolpyruvyl shikimate-3-phosphate and inorganic phosphate. In Xylella fastidiosa (strain 9a5c), this protein is 3-phosphoshikimate 1-carboxyvinyltransferase.